A 59-amino-acid polypeptide reads, in one-letter code: UPF0434 protein PBPRA2383 (59 aa).

This sequence belongs to the UPF0434 family.

This chain is UPF0434 protein PBPRA2383, found in Photobacterium profundum (strain SS9).